The chain runs to 89 residues: Small ribosomal subunit protein uS15 (89 aa).

This sequence belongs to the universal ribosomal protein uS15 family. As to quaternary structure, part of the 30S ribosomal subunit. Forms a bridge to the 50S subunit in the 70S ribosome, contacting the 23S rRNA.

In terms of biological role, one of the primary rRNA binding proteins, it binds directly to 16S rRNA where it helps nucleate assembly of the platform of the 30S subunit by binding and bridging several RNA helices of the 16S rRNA. Functionally, forms an intersubunit bridge (bridge B4) with the 23S rRNA of the 50S subunit in the ribosome. The polypeptide is Small ribosomal subunit protein uS15 (Crocosphaera subtropica (strain ATCC 51142 / BH68) (Cyanothece sp. (strain ATCC 51142))).